We begin with the raw amino-acid sequence, 740 residues long: Phosphoribosylformylglycinamidine synthase subunit PurL (740 aa).

The active site involves His53. ATP is bound by residues Tyr56 and Lys95. Position 97 (Glu97) interacts with Mg(2+). Residues Ser98 to His101 and Arg120 contribute to the substrate site. The Proton acceptor role is filled by His99. Asp121 provides a ligand contact to Mg(2+). Gln244 lines the substrate pocket. Asp274 is a binding site for Mg(2+). Glu318 to Gln320 is a binding site for substrate. Positions 501 and 538 each coordinate ATP. Asn539 serves as a coordination point for Mg(2+). Ser541 serves as a coordination point for substrate.

Belongs to the FGAMS family. As to quaternary structure, monomer. Part of the FGAM synthase complex composed of 1 PurL, 1 PurQ and 2 PurS subunits.

It localises to the cytoplasm. It catalyses the reaction N(2)-formyl-N(1)-(5-phospho-beta-D-ribosyl)glycinamide + L-glutamine + ATP + H2O = 2-formamido-N(1)-(5-O-phospho-beta-D-ribosyl)acetamidine + L-glutamate + ADP + phosphate + H(+). The protein operates within purine metabolism; IMP biosynthesis via de novo pathway; 5-amino-1-(5-phospho-D-ribosyl)imidazole from N(2)-formyl-N(1)-(5-phospho-D-ribosyl)glycinamide: step 1/2. Part of the phosphoribosylformylglycinamidine synthase complex involved in the purines biosynthetic pathway. Catalyzes the ATP-dependent conversion of formylglycinamide ribonucleotide (FGAR) and glutamine to yield formylglycinamidine ribonucleotide (FGAM) and glutamate. The FGAM synthase complex is composed of three subunits. PurQ produces an ammonia molecule by converting glutamine to glutamate. PurL transfers the ammonia molecule to FGAR to form FGAM in an ATP-dependent manner. PurS interacts with PurQ and PurL and is thought to assist in the transfer of the ammonia molecule from PurQ to PurL. This is Phosphoribosylformylglycinamidine synthase subunit PurL from Lactobacillus delbrueckii subsp. bulgaricus (strain ATCC 11842 / DSM 20081 / BCRC 10696 / JCM 1002 / NBRC 13953 / NCIMB 11778 / NCTC 12712 / WDCM 00102 / Lb 14).